We begin with the raw amino-acid sequence, 59 residues long: Large ribosomal subunit protein uL30 (59 aa).

This sequence belongs to the universal ribosomal protein uL30 family. Part of the 50S ribosomal subunit.

The polypeptide is Large ribosomal subunit protein uL30 (Stutzerimonas stutzeri (strain A1501) (Pseudomonas stutzeri)).